The sequence spans 144 residues: Granulocyte-macrophage colony-stimulating factor (144 aa).

The first 17 residues, 1–17 (MWLQNLLFLNTVVCSIS), serve as a signal peptide directing secretion. Ser-22 and Ser-24 each carry an O-linked (GalNAc...) serine glycan. Thr-27 carries O-linked (GalNAc...) threonine glycosylation. 3 N-linked (GlcNAc...) asparagine glycosylation sites follow: Asn-44, Asn-45, and Asn-54. Cystine bridges form between Cys-71–Cys-113 and Cys-105–Cys-138.

The protein belongs to the GM-CSF family. Monomer. The signaling GM-CSF receptor complex is a dodecamer of two head-to-head hexamers of two alpha, two beta, and two ligand subunits.

The protein resides in the secreted. Functionally, cytokine that stimulates the growth and differentiation of hematopoietic precursor cells from various lineages, including granulocytes, macrophages, eosinophils and erythrocytes. This chain is Granulocyte-macrophage colony-stimulating factor (CSF2), found in Felis catus (Cat).